Reading from the N-terminus, the 516-residue chain is 3-ketoacyl-CoA synthase 4 (516 aa).

A run of 2 helical transmembrane segments spans residues 48–68 (LISN…SVEA) and 87–107 (LVSI…YVMT). Residues 104 to 393 (YVMTRPRPVY…FFMTLVVKKL (290 aa)) enclose the FAE domain. Active-site residues include Cys248, His327, His411, His415, His444, and Asn448.

The protein belongs to the thiolase-like superfamily. Chalcone/stilbene synthases family. As to expression, expressed at low levels in siliques, flowers, leaves and stems.

Its subcellular location is the membrane. It catalyses the reaction a very-long-chain acyl-CoA + malonyl-CoA + H(+) = a very-long-chain 3-oxoacyl-CoA + CO2 + CoA. The protein operates within lipid metabolism; fatty acid biosynthesis. This Arabidopsis thaliana (Mouse-ear cress) protein is 3-ketoacyl-CoA synthase 4.